A 491-amino-acid polypeptide reads, in one-letter code: Protein DETOXIFICATION 56 (491 aa).

The next 12 helical transmembrane spans lie at 39–59 (LPLV…SVFL), 72–92 (LGFS…SAAM), 111–131 (TLFM…FLWL), 154–174 (LLYL…KAYL), 181–201 (LPIM…NIVL), 212–232 (MAVW…VIVV), 261–281 (GPCC…VLLT), 291–311 (VSIL…MLSL), 336–356 (YTTL…MIAF), 379–399 (MLIM…GEIV), 409–429 (MYAN…TLAF), and 438–458 (FLIG…IFIA).

The protein belongs to the multi antimicrobial extrusion (MATE) (TC 2.A.66.1) family. As to quaternary structure, interacts with BCA4 and HT1. In terms of tissue distribution, preferentially expressed in guard cells.

It localises to the cell membrane. In terms of biological role, could function as a HCO(3)(-) -sensing component in the CO(2) signaling pathway in guard cells. Acts as an upstream repressor of HT1. Plays a role in stomatal response to CO(2). The chain is Protein DETOXIFICATION 56 from Arabidopsis thaliana (Mouse-ear cress).